We begin with the raw amino-acid sequence, 298 residues long: U1 small nuclear ribonucleoprotein A (298 aa).

RRM domains lie at 2 to 113 (SALY…KART) and 227 to 298 (KVLL…GFAK).

It belongs to the RRM U1 A/B'' family. As to quaternary structure, component of the spliceosome where it is associated with snRNP U1.

The protein localises to the nucleus. Functionally, involved in nuclear mRNA splicing. The principal role of the U1A is to help fold or maintain U1 RNA in an active configuration. It is the first snRNP to interact with pre-mRNA. This interaction is required for the subsequent binding of U2 snRNP and the U4/U6/U5 tri-snRNP. The protein is U1 small nuclear ribonucleoprotein A (MUD1) of Saccharomyces cerevisiae (strain ATCC 204508 / S288c) (Baker's yeast).